Here is an 831-residue protein sequence, read N- to C-terminus: Cadherin-related family member 5 (831 aa).

The first 28 residues, 1–28 (MGAPALLWPSLLLPWLTVLFGQPPGTLA), serve as a signal peptide directing secretion. Topologically, residues 29–641 (QTQVCSVNQT…GQRFSTVDMA (613 aa)) are extracellular. 11 N-linked (GlcNAc...) asparagine glycosylation sites follow: N36, N45, N84, N135, N143, N173, N201, N287, N311, N408, and N475. Cadherin domains lie at 53–125 (VNIF…DNAP), 128–240 (SFEI…TPWF), 252–357 (IHAQ…PLQF), and 358–459 (SQSL…ERER). The interval 452 to 632 (IQVSERERTP…STGAGEQGDG (181 aa)) is disordered. A compositionally biased stretch (polar residues) spans 473 to 491 (SSNTTMEAPLTSGTSQRPA). Low complexity predominate over residues 505-540 (GGTTLRPPTPASSIPGGSPTLGTSTSPQTTTPGGDS). Residues 541–554 (AQTPKPGTSHPTAP) show a composition bias toward polar residues. Repeat copies occupy residues 541 to 571 (AQTP…RSDS) and 572 to 602 (TQTP…SGSS). The 3 X 31 AA approximate tandem repeats stretch occupies residues 541 to 614 (AQTPKPGTSH…TPKPGTSQST (74 aa)). The segment covering 555–572 (TSRTSTSLMTTSSRSDST) has biased composition (low complexity). Polar residues-rich tracts occupy residues 573–582 (QTPKPGTSQP) and 589–623 (ASTS…SLPS). Residues 605-614 (TPKPGTSQST) form a 3; truncated repeat. The helical transmembrane segment at 642-662 (VLGGVLGALLLLALICLVILV) threads the bilayer. Residues 663 to 831 (HKHYRHRLAC…FGVDADNTYI (169 aa)) lie on the Cytoplasmic side of the membrane. A mediates interaction with USH1C and MYO7B and is required for proper localization to microvilli tips and function in microvilli organization region spans residues 663-831 (HKHYRHRLAC…FGVDADNTYI (169 aa)). 2 disordered regions span residues 675–774 (GKAS…GGYK) and 793–831 (EPTA…NTYI). Phosphoserine is present on residues S699, S721, and S725. The span at 716–738 (PLRPPSPMSSSPTPPSSTPPSPQ) shows a compositional bias: pro residues. Position 728 is a phosphothreonine (T728). S736 and S753 each carry phosphoserine. Residues 761-771 (LTKERRPEGEG) are compositionally biased toward basic and acidic residues. Phosphothreonine is present on T795. Positions 797-807 (DVDSASASGSE) are enriched in low complexity. Phosphoserine is present on residues S802, S804, and S806.

As to quaternary structure, part of the IMAC/intermicrovillar adhesion complex/intermicrovillar tip-link complex composed of ANKS4B, MYO7B, USH1C, CDHR2 and CDHR5. Interacts (via cytoplasmic domain) with USH1C and MYO7B; required for proper localization of CDHR5 to microvilli tips and its function in brush border differentiation. Post-translationally, N- and O-glycosylated.

The protein localises to the apical cell membrane. It localises to the cell projection. The protein resides in the microvillus membrane. Intermicrovillar adhesion molecule that forms, via its extracellular domain, calcium-dependent heterophilic complexes with CDHR2 on adjacent microvilli. Thereby, controls the packing of microvilli at the apical membrane of epithelial cells. Through its cytoplasmic domain, interacts with microvillus cytoplasmic proteins to form the intermicrovillar adhesion complex/IMAC. This complex plays a central role in microvilli and epithelial brush border differentiation. The chain is Cadherin-related family member 5 from Mus musculus (Mouse).